The chain runs to 338 residues: 1-aminocyclopropane-1-carboxylate deaminase (338 aa).

Lys-51 bears the N6-(pyridoxal phosphate)lysine mark. Ser-78 serves as the catalytic Nucleophile.

Belongs to the ACC deaminase/D-cysteine desulfhydrase family. Homotrimer. It depends on pyridoxal 5'-phosphate as a cofactor.

The enzyme catalyses 1-aminocyclopropane-1-carboxylate + H2O = 2-oxobutanoate + NH4(+). In terms of biological role, catalyzes a cyclopropane ring-opening reaction, the irreversible conversion of 1-aminocyclopropane-1-carboxylate (ACC) to ammonia and alpha-ketobutyrate. Allows growth on ACC as a nitrogen source. This is 1-aminocyclopropane-1-carboxylate deaminase from Variovorax paradoxus (strain S110).